Here is a 316-residue protein sequence, read N- to C-terminus: Acetyl-coenzyme A carboxylase carboxyl transferase subunit beta (316 aa).

The CoA carboxyltransferase N-terminal domain maps to 29–298; sequence LWTKCPNCGV…LLSPLNSHHH (270 aa). Zn(2+) is bound by residues Cys-33, Cys-36, Cys-52, and Cys-55. The segment at 33–55 adopts a C4-type zinc-finger fold; the sequence is CPNCGVLAYTKDLLANQLVCLDC.

This sequence belongs to the AccD/PCCB family. As to quaternary structure, acetyl-CoA carboxylase is a heterohexamer composed of biotin carboxyl carrier protein (AccB), biotin carboxylase (AccC) and two subunits each of ACCase subunit alpha (AccA) and ACCase subunit beta (AccD). Zn(2+) serves as cofactor.

The protein localises to the cytoplasm. It carries out the reaction N(6)-carboxybiotinyl-L-lysyl-[protein] + acetyl-CoA = N(6)-biotinyl-L-lysyl-[protein] + malonyl-CoA. Its pathway is lipid metabolism; malonyl-CoA biosynthesis; malonyl-CoA from acetyl-CoA: step 1/1. In terms of biological role, component of the acetyl coenzyme A carboxylase (ACC) complex. Biotin carboxylase (BC) catalyzes the carboxylation of biotin on its carrier protein (BCCP) and then the CO(2) group is transferred by the transcarboxylase to acetyl-CoA to form malonyl-CoA. The protein is Acetyl-coenzyme A carboxylase carboxyl transferase subunit beta of Microcystis aeruginosa (strain NIES-843 / IAM M-2473).